A 283-amino-acid chain; its full sequence is Transmembrane protein 45B (283 aa).

7 helical membrane passes run 7–27 (HALP…KCPF), 55–75 (LIEG…EQFV), 99–119 (MYLF…SHHV), 121–141 (VGLD…LFYF), 153–173 (IHSL…MEVF), 187–207 (LAIL…PLSG), and 218–238 (IMFI…IVGI). Residues 261-283 (GLRKSTSTDSSSQKALLQESDEE) are disordered. Over residues 264–275 (KSTSTDSSSQKA) the composition is skewed to polar residues.

This sequence belongs to the TMEM45 family.

The protein resides in the membrane. In Danio rerio (Zebrafish), this protein is Transmembrane protein 45B (tmem45b).